Here is a 244-residue protein sequence, read N- to C-terminus: Ribonuclease 3 (244 aa).

The RNase III domain occupies 21 to 148 (DHAPLLEAWG…MLGAIYLHHG (128 aa)). Mg(2+) is bound at residue glutamate 61. Aspartate 65 is an active-site residue. 2 residues coordinate Mg(2+): aspartate 134 and glutamate 137. Glutamate 137 is a catalytic residue. The region spanning 175–242 (DWKTVLLEKL…AKQAVQKLNE (68 aa)) is the DRBM domain.

It belongs to the ribonuclease III family. In terms of assembly, homodimer. Mg(2+) serves as cofactor.

The protein resides in the cytoplasm. The enzyme catalyses Endonucleolytic cleavage to 5'-phosphomonoester.. Its function is as follows. Digests double-stranded RNA. Involved in the processing of primary rRNA transcript to yield the immediate precursors to the large and small rRNAs (23S and 16S). Processes some mRNAs, and tRNAs when they are encoded in the rRNA operon. Processes pre-crRNA and tracrRNA of type II CRISPR loci if present in the organism. The chain is Ribonuclease 3 from Corynebacterium jeikeium (strain K411).